Consider the following 222-residue polypeptide: Probable transaldolase (222 aa).

Lysine 91 acts as the Schiff-base intermediate with substrate in catalysis.

This sequence belongs to the transaldolase family. Type 3B subfamily.

The protein localises to the cytoplasm. The catalysed reaction is D-sedoheptulose 7-phosphate + D-glyceraldehyde 3-phosphate = D-erythrose 4-phosphate + beta-D-fructose 6-phosphate. It functions in the pathway carbohydrate degradation; pentose phosphate pathway; D-glyceraldehyde 3-phosphate and beta-D-fructose 6-phosphate from D-ribose 5-phosphate and D-xylulose 5-phosphate (non-oxidative stage): step 2/3. Its function is as follows. Transaldolase is important for the balance of metabolites in the pentose-phosphate pathway. This chain is Probable transaldolase, found in Chlorobium luteolum (strain DSM 273 / BCRC 81028 / 2530) (Pelodictyon luteolum).